The primary structure comprises 3970 residues: Polyketide synthase-nonribosomal peptide synthetase hybrid himA (3970 aa).

Residues 8–443 (SEPIAIIGSA…GTNSHAILES (436 aa)) enclose the Ketosynthase family 3 (KS3) domain. Active-site for beta-ketoacyl synthase activity residues include cysteine 181, histidine 320, and histidine 363. A malonyl-CoA:ACP transacylase (MAT) domain region spans residues 561-876 (IFTGQGAQWP…PYAGLLHRGR (316 aa)). Residues 949–1083 (HELLGVRTSD…GMVHLHLGEP (135 aa)) are N-terminal hotdog fold. Residues 949–1253 (HELLGVRTSD…GLTVVALSST (305 aa)) are dehydratase (DH) domain. The PKS/mFAS DH domain occupies 949-1256 (HELLGVRTSD…VVALSSTGPA (308 aa)). Catalysis depends on histidine 981, which acts as the Proton acceptor; for dehydratase activity. Positions 1098-1256 (GLNRVDLDEF…VVALSSTGPA (159 aa)) are C-terminal hotdog fold. The active-site Proton donor; for dehydratase activity is aspartate 1158. Residues 2060 to 2234 (TYVMIGLTGE…ASVLDIGMVS (175 aa)) form a ketoreductase (KR) domain region. In terms of domain architecture, Carrier 1 spans 2342–2419 (AIAAILTESF…TLAEEVAKEL (78 aa)). Serine 2379 is modified (O-(pantetheine 4'-phosphoryl)serine). The disordered stretch occupies residues 2420–2482 (FEDRSTSAPP…NDDSDPTAQC (63 aa)). Low complexity predominate over residues 2445–2466 (GSSTDPSSNSDSKSGFDGFSSD). A compositionally biased stretch (acidic residues) spans 2467–2477 (DSSDIANDDSD). A condensation (C) domain region spans residues 2487–2919 (PMSLSQARMW…ATTPTERVAT (433 aa)). An adenylation (A) domain region spans residues 2974–3381 (SYKAMSDRVN…LGDIANAILK (408 aa)). Residues 3466–3495 (RPLPASGDEDGDEDTETETGADADADAGAD) form a disordered region. Over residues 3472-3492 (GDEDGDEDTETETGADADADA) the composition is skewed to acidic residues. The region spanning 3496 to 3574 (TTLSDIHSKL…AIAERILRGV (79 aa)) is the Carrier 2 domain. Residue serine 3534 is modified to O-(pantetheine 4'-phosphoryl)serine. The reductase (R) domain stretch occupies residues 3633–3866 (LTGATGFLGR…FIRVETVAEE (234 aa)).

This sequence in the C-terminal section; belongs to the NRP synthetase family.

It participates in secondary metabolite biosynthesis. In terms of biological role, polyketide synthase-nonribosomal peptide synthetase hybrid; part of the him gene cluster that mediates the biosynthesis of himeic acid A, a ubiquitin-activating enzyme (E1) inhibitor. First, himA, together with the trans-enoyl reductase himH, catalyzes the formation of apolyketide chain, which is then condensed with leucine by the NRPS activity of himA. Dieckmann cyclization and release from himA gives a tetramic acid intermediate as the product of himA PKS-NRPS. HimG then catalyzes alpha-oxidation of the tetramic acid ring, with a subsequent rearrangement to yield apyrone intermediate. Two terminal methyl groups of polyketide and amide side chains are oxidized to carboxylic acids by himC cytochrome P450 monooxygenase to form himeic acid A. Himeic acid A is further converted to himeic acids B and C during culture growth. No gene responsible for pyrone to pyridone conversion was found in the him gene cluster and himeic acid A is non-enzymatically converted to himeic acid C by the incorporation of an ammonium nitrogen atom in a pH5 buffer, and to himeic acid B at a conversion ratio of 50% during incubation in MeOH for 5 days. The sequence is that of Polyketide synthase-nonribosomal peptide synthetase hybrid himA from Aspergillus japonicus.